A 129-amino-acid chain; its full sequence is Small ribosomal subunit protein uS11 (129 aa).

Belongs to the universal ribosomal protein uS11 family. In terms of assembly, part of the 30S ribosomal subunit. Interacts with proteins S7 and S18. Binds to IF-3.

Located on the platform of the 30S subunit, it bridges several disparate RNA helices of the 16S rRNA. Forms part of the Shine-Dalgarno cleft in the 70S ribosome. The protein is Small ribosomal subunit protein uS11 of Nitrosomonas eutropha (strain DSM 101675 / C91 / Nm57).